The chain runs to 431 residues: Peptidase B (431 aa).

Mn(2+) is bound by residues Lys196 and Asp201. Residue Lys208 is part of the active site. Residues Asp219, Asp278, and Glu280 each contribute to the Mn(2+) site. Arg282 is an active-site residue.

This sequence belongs to the peptidase M17 family. As to quaternary structure, homohexamer. Mn(2+) is required as a cofactor.

The protein resides in the cytoplasm. It carries out the reaction Release of an N-terminal amino acid, Xaa, from a peptide or arylamide. Xaa is preferably Glu or Asp but may be other amino acids, including Leu, Met, His, Cys and Gln.. Probably plays an important role in intracellular peptide degradation. The protein is Peptidase B of Serratia proteamaculans (strain 568).